Here is a 494-residue protein sequence, read N- to C-terminus: ATP synthase subunit alpha, chloroplastic (494 aa).

170–177 (GDRQTGKT) is a binding site for ATP.

It belongs to the ATPase alpha/beta chains family. In terms of assembly, F-type ATPases have 2 components, CF(1) - the catalytic core - and CF(0) - the membrane proton channel. CF(1) has five subunits: alpha(3), beta(3), gamma(1), delta(1), epsilon(1). CF(0) has four main subunits: a, b, b' and c.

It is found in the plastid. The protein localises to the chloroplast thylakoid membrane. The enzyme catalyses ATP + H2O + 4 H(+)(in) = ADP + phosphate + 5 H(+)(out). Functionally, produces ATP from ADP in the presence of a proton gradient across the membrane. The alpha chain is a regulatory subunit. In Pinus thunbergii (Japanese black pine), this protein is ATP synthase subunit alpha, chloroplastic.